Consider the following 135-residue polypeptide: Transcriptional regulator HosA (135 aa).

Residues 4-134 (RNKAFHQLRQ…FVQLVRKMMN (131 aa)) form the HTH marR-type domain. Positions 48 to 71 (QVALIEAAVSTKATLAEMLARMEN) form a DNA-binding region, H-T-H motif.

In terms of biological role, involved in the temperature-dependent positive control of flagellum-driven swimming motility and cellular aggregation. Regulates fliC expression by directly interacting with fliC promoter. This Escherichia coli O157:H7 protein is Transcriptional regulator HosA (hosA).